The primary structure comprises 321 residues: Basic endochitinase A (321 aa).

An N-terminal signal peptide occupies residues 1–19; it reads MGAFALFAVLAMAVTMAVA. Residues 20–60 form the Chitin-binding type-1 domain; sequence EQCGSQAGGATCPNCLCCSRFGWCGSTSDYCGDGCQSQCAG. Cystine bridges form between cysteine 22-cysteine 37, cysteine 31-cysteine 43, cysteine 34-cysteine 61, cysteine 36-cysteine 50, and cysteine 54-cysteine 58. The interval 62 to 79 is hinge region (Gly/Pro/Thr-rich); the sequence is GGGGTPVTPTPTPSGGGG. The segment at 80 to 321 is catalytic; that stretch reads VSSIVSRALF…LDCYNQRPFA (242 aa). Cystine bridges form between cysteine 101–cysteine 163, cysteine 175–cysteine 183, and cysteine 301–cysteine 314. Residue glutamate 145 is the Proton donor of the active site.

Belongs to the glycosyl hydrolase 19 family. Chitinase class I subfamily. Localized in the aleurone cells of the seed endosperm (at protein level).

The catalysed reaction is Random endo-hydrolysis of N-acetyl-beta-D-glucosaminide (1-&gt;4)-beta-linkages in chitin and chitodextrins.. Its function is as follows. Defense against chitin-containing fungal pathogens. Binds the hyphal tips, lateral walls and septa of fungi and degrades mature chitin. This is Basic endochitinase A from Secale cereale (Rye).